We begin with the raw amino-acid sequence, 380 residues long: Cytochrome b (380 aa).

The next 4 helical transmembrane spans lie at 34-54 (FGSL…LLAM), 78-99 (WLLH…FLHI), 114-134 (WNTG…GYVL), and 179-199 (FFAL…IHLM). The heme b site is built by His84 and His98. Heme b is bound by residues His183 and His197. His202 is an a ubiquinone binding site. The next 4 membrane-spanning stretches (helical) occupy residues 227 to 247 (IKDI…TLFS), 289 to 309 (LGGV…PFLH), 321 to 341 (LSQT…WVGS), and 348 to 368 (FIII…ILFP).

The protein belongs to the cytochrome b family. In terms of assembly, the cytochrome bc1 complex contains 11 subunits: 3 respiratory subunits (MT-CYB, CYC1 and UQCRFS1), 2 core proteins (UQCRC1 and UQCRC2) and 6 low-molecular weight proteins (UQCRH/QCR6, UQCRB/QCR7, UQCRQ/QCR8, UQCR10/QCR9, UQCR11/QCR10 and a cleavage product of UQCRFS1). This cytochrome bc1 complex then forms a dimer. The cofactor is heme b.

It localises to the mitochondrion inner membrane. Its function is as follows. Component of the ubiquinol-cytochrome c reductase complex (complex III or cytochrome b-c1 complex) that is part of the mitochondrial respiratory chain. The b-c1 complex mediates electron transfer from ubiquinol to cytochrome c. Contributes to the generation of a proton gradient across the mitochondrial membrane that is then used for ATP synthesis. The sequence is that of Cytochrome b (MT-CYB) from Meleagris gallopavo (Wild turkey).